Here is a 406-residue protein sequence, read N- to C-terminus: Cyclin-dependent kinase 4 homolog (406 aa).

The Protein kinase domain occupies 102 to 388 (TFLFQALGKG…ARGALSHPFL (287 aa)). ATP contacts are provided by residues 108–116 (LGKGAYGNV) and Lys131. Asp233 serves as the catalytic Proton acceptor. Asn238 and Asp251 together coordinate Mg(2+).

It belongs to the protein kinase superfamily. CMGC Ser/Thr protein kinase family. CDC2/CDKX subfamily. Interacts with cyd-1; the interaction is likely involved in regulating cdk-4 activity. Mg(2+) serves as cofactor.

The catalysed reaction is L-seryl-[protein] + ATP = O-phospho-L-seryl-[protein] + ADP + H(+). It catalyses the reaction L-threonyl-[protein] + ATP = O-phospho-L-threonyl-[protein] + ADP + H(+). In terms of biological role, serine/threonine-protein kinase which, in association with cyclin D-like protein cyd-1, is required for the progression through the G1 phase of the cell cycle during postembryonic development by phosphorylating and inhibiting lin-35 and fzr-1. In complex with cyd-1, involved in sex determination during gonadogenesis by regulating the asymmetric division of the somatic gonadal precursor cell (SGP). This Caenorhabditis elegans protein is Cyclin-dependent kinase 4 homolog.